The following is a 311-amino-acid chain: Malate dehydrogenase (311 aa).

NAD(+)-binding positions include 7–12 (GAGNVG) and Asp32. Positions 82 and 88 each coordinate substrate. Residues Asn95 and 118 to 120 (VSN) contribute to the NAD(+) site. Positions 120 and 151 each coordinate substrate. The active-site Proton acceptor is His175.

This sequence belongs to the LDH/MDH superfamily. MDH type 3 family.

It carries out the reaction (S)-malate + NAD(+) = oxaloacetate + NADH + H(+). Catalyzes the reversible oxidation of malate to oxaloacetate. The polypeptide is Malate dehydrogenase (Flavobacterium johnsoniae (strain ATCC 17061 / DSM 2064 / JCM 8514 / BCRC 14874 / CCUG 350202 / NBRC 14942 / NCIMB 11054 / UW101) (Cytophaga johnsonae)).